Consider the following 567-residue polypeptide: Adenine deaminase (567 aa).

This sequence belongs to the metallo-dependent hydrolases superfamily. Adenine deaminase family. The cofactor is Mn(2+).

The catalysed reaction is adenine + H2O + H(+) = hypoxanthine + NH4(+). The protein is Adenine deaminase of Methanothrix thermoacetophila (strain DSM 6194 / JCM 14653 / NBRC 101360 / PT) (Methanosaeta thermophila).